We begin with the raw amino-acid sequence, 493 residues long: Mitochondrial distribution and morphology protein 10 (493 aa).

Belongs to the MDM10 family. As to quaternary structure, component of the ER-mitochondria encounter structure (ERMES) or MDM complex, composed of MMM1, MDM10, MDM12 and MDM34. Associates with the mitochondrial outer membrane sorting assembly machinery SAM(core) complex, which consists of SAM35, SAM37 and SAM50, to form a SAM(holo) complex.

It is found in the mitochondrion outer membrane. Component of the ERMES/MDM complex, which serves as a molecular tether to connect the endoplasmic reticulum and mitochondria. Components of this complex are involved in the control of mitochondrial shape and protein biogenesis and may function in phospholipid exchange. MDM10 is involved in the late assembly steps of the general translocase of the mitochondrial outer membrane (TOM complex). Functions in the TOM40-specific route of the assembly of outer membrane beta-barrel proteins, including the association of TOM40 with the receptor TOM22 and small TOM proteins. Can associate with the SAM(core) complex as well as the MDM12-MMM1 complex, both involved in late steps of the major beta-barrel assembly pathway, that is responsible for biogenesis of all outer membrane beta-barrel proteins. May act as a switch that shuttles between both complexes and channels precursor proteins into the TOM40-specific pathway. Plays a role in mitochondrial morphology and in the inheritance of mitochondria. This Saccharomyces cerevisiae (strain RM11-1a) (Baker's yeast) protein is Mitochondrial distribution and morphology protein 10.